Reading from the N-terminus, the 354-residue chain is Peptide chain release factor 1 (354 aa).

N5-methylglutamine is present on Q230.

This sequence belongs to the prokaryotic/mitochondrial release factor family. Methylated by PrmC. Methylation increases the termination efficiency of RF1.

It localises to the cytoplasm. Functionally, peptide chain release factor 1 directs the termination of translation in response to the peptide chain termination codons UAG and UAA. The protein is Peptide chain release factor 1 of Pelobacter propionicus (strain DSM 2379 / NBRC 103807 / OttBd1).